Here is a 628-residue protein sequence, read N- to C-terminus: 1-deoxy-D-xylulose-5-phosphate synthase (628 aa).

Thiamine diphosphate contacts are provided by residues H80 and 121–123; that span reads GHS. Position 152 (D152) interacts with Mg(2+). Residues 153–154, N181, Y289, and E370 contribute to the thiamine diphosphate site; that span reads GG. Mg(2+) is bound at residue N181.

It belongs to the transketolase family. DXPS subfamily. Homodimer. Requires Mg(2+) as cofactor. The cofactor is thiamine diphosphate.

It carries out the reaction D-glyceraldehyde 3-phosphate + pyruvate + H(+) = 1-deoxy-D-xylulose 5-phosphate + CO2. Its pathway is metabolic intermediate biosynthesis; 1-deoxy-D-xylulose 5-phosphate biosynthesis; 1-deoxy-D-xylulose 5-phosphate from D-glyceraldehyde 3-phosphate and pyruvate: step 1/1. Its function is as follows. Catalyzes the acyloin condensation reaction between C atoms 2 and 3 of pyruvate and glyceraldehyde 3-phosphate to yield 1-deoxy-D-xylulose-5-phosphate (DXP). This is 1-deoxy-D-xylulose-5-phosphate synthase from Alkalilimnicola ehrlichii (strain ATCC BAA-1101 / DSM 17681 / MLHE-1).